The chain runs to 105 residues: MAEWNGEYVSPYAEHGKKSEQVKKITVSIPLKVLKILTDERTRRQVNNLRHATNSELLCEAFLHAFTGQPLPNDEDLRKERSDEIPEAAKILMRELGVDPDTWEY.

This sequence belongs to the MetJ family. Homodimer.

The protein localises to the cytoplasm. In terms of biological role, this regulatory protein, when combined with SAM (S-adenosylmethionine) represses the expression of the methionine regulon and of enzymes involved in SAM synthesis. In Yersinia enterocolitica serotype O:8 / biotype 1B (strain NCTC 13174 / 8081), this protein is Met repressor.